The sequence spans 179 residues: Large ribosomal subunit protein uL5 (179 aa).

This sequence belongs to the universal ribosomal protein uL5 family. As to quaternary structure, part of the 50S ribosomal subunit; part of the 5S rRNA/L5/L18/L25 subcomplex. Contacts the 5S rRNA and the P site tRNA. Forms a bridge to the 30S subunit in the 70S ribosome.

In terms of biological role, this is one of the proteins that bind and probably mediate the attachment of the 5S RNA into the large ribosomal subunit, where it forms part of the central protuberance. In the 70S ribosome it contacts protein S13 of the 30S subunit (bridge B1b), connecting the 2 subunits; this bridge is implicated in subunit movement. Contacts the P site tRNA; the 5S rRNA and some of its associated proteins might help stabilize positioning of ribosome-bound tRNAs. In Rickettsia akari (strain Hartford), this protein is Large ribosomal subunit protein uL5.